The sequence spans 171 residues: 3-hydroxydecanoyl-[acyl-carrier-protein] dehydratase (171 aa).

H70 is an active-site residue.

It belongs to the thioester dehydratase family. FabA subfamily. As to quaternary structure, homodimer.

The protein localises to the cytoplasm. It carries out the reaction a (3R)-hydroxyacyl-[ACP] = a (2E)-enoyl-[ACP] + H2O. The enzyme catalyses (3R)-hydroxydecanoyl-[ACP] = (2E)-decenoyl-[ACP] + H2O. It catalyses the reaction (2E)-decenoyl-[ACP] = (3Z)-decenoyl-[ACP]. It participates in lipid metabolism; fatty acid biosynthesis. Functionally, necessary for the introduction of cis unsaturation into fatty acids. Catalyzes the dehydration of (3R)-3-hydroxydecanoyl-ACP to E-(2)-decenoyl-ACP and then its isomerization to Z-(3)-decenoyl-ACP. Can catalyze the dehydratase reaction for beta-hydroxyacyl-ACPs with saturated chain lengths up to 16:0, being most active on intermediate chain length. The polypeptide is 3-hydroxydecanoyl-[acyl-carrier-protein] dehydratase (Hydrogenovibrio crunogenus (strain DSM 25203 / XCL-2) (Thiomicrospira crunogena)).